Reading from the N-terminus, the 660-residue chain is Zeaxanthin epoxidase, chloroplastic (660 aa).

The transit peptide at 1–49 (MYASSARDGIPGKWCNARRKQLPLLISKDFPAELYHSLPCKSLENGHIK) directs the protein to the chloroplast. Residues 79-107 (KVLV…LVFE) and 357-370 (TFSW…LLGD) each bind FAD. The FHA domain occupies 545 to 609 (LVLSRDENMP…HGTWFIDNEG (65 aa)).

It depends on FAD as a cofactor.

It localises to the plastid. The protein resides in the chloroplast membrane. The protein localises to the chloroplast thylakoid membrane. The catalysed reaction is all-trans-zeaxanthin + 4 reduced [2Fe-2S]-[ferredoxin] + 2 O2 + 4 H(+) = all-trans-violaxanthin + 4 oxidized [2Fe-2S]-[ferredoxin] + 2 H2O. It catalyses the reaction all-trans-zeaxanthin + 2 reduced [2Fe-2S]-[ferredoxin] + O2 + 2 H(+) = all-trans-antheraxanthin + 2 oxidized [2Fe-2S]-[ferredoxin] + H2O. The enzyme catalyses all-trans-antheraxanthin + 2 reduced [2Fe-2S]-[ferredoxin] + O2 + 2 H(+) = all-trans-violaxanthin + 2 oxidized [2Fe-2S]-[ferredoxin] + H2O. It carries out the reaction beta-cryptoxanthin + 2 reduced [2Fe-2S]-[ferredoxin] + O2 + 2 H(+) = (5R,6S)-5,6-epoxi-beta-cryptoxanthin + 2 oxidized [2Fe-2S]-[ferredoxin] + H2O. Its pathway is plant hormone biosynthesis; abscisate biosynthesis. Converts zeaxanthin into antheraxanthin and subsequently violaxanthin. Also acts on beta-cryptoxanthin. Involved in the epoxidation of zeaxanthin. This Capsicum annuum (Capsicum pepper) protein is Zeaxanthin epoxidase, chloroplastic.